Consider the following 199-residue polypeptide: NAD(P)H dehydrogenase (quinone) (199 aa).

One can recognise a Flavodoxin-like domain in the interval 4–190 (ILVLYYSMYG…KIARYQGEHV (187 aa)). Residues 10 to 15 (SMYGHI) and 79 to 81 (TRF) each bind FMN. An NAD(+)-binding site is contributed by Tyr-12. Residue Trp-99 participates in substrate binding. His-134 serves as a coordination point for FMN.

The protein belongs to the WrbA family. It depends on FMN as a cofactor.

The enzyme catalyses a quinone + NADH + H(+) = a quinol + NAD(+). It catalyses the reaction a quinone + NADPH + H(+) = a quinol + NADP(+). This Photorhabdus laumondii subsp. laumondii (strain DSM 15139 / CIP 105565 / TT01) (Photorhabdus luminescens subsp. laumondii) protein is NAD(P)H dehydrogenase (quinone).